A 188-amino-acid polypeptide reads, in one-letter code: Ribosome-recycling factor (188 aa).

This sequence belongs to the RRF family.

The protein localises to the cytoplasm. Responsible for the release of ribosomes from messenger RNA at the termination of protein biosynthesis. May increase the efficiency of translation by recycling ribosomes from one round of translation to another. This chain is Ribosome-recycling factor, found in Anaeromyxobacter dehalogenans (strain 2CP-C).